The following is a 260-amino-acid chain: UPF0246 protein Cbei_1739 (260 aa).

The protein belongs to the UPF0246 family.

The sequence is that of UPF0246 protein Cbei_1739 from Clostridium beijerinckii (strain ATCC 51743 / NCIMB 8052) (Clostridium acetobutylicum).